The primary structure comprises 510 residues: MKIEKSQRNLEIDRSRKNDFLYPLIFREYIYTFAHDRDLNRSILLENVSYDNKYSLLIVKRLITRMYQQNHLIISANDSNQNTFFRYNKNLYFQMISEGFAVIVEIPFSLRLVSSLERSEIVKSHNLRSIHSIFPFLEGKFPHLNYLSEGLIPYPIHLEKLVQILRYWVKDPSSLHLLRLFLHEYWNLNSLIIPKKSISFFVKKNQRFFLFLYNSHVYEYESVFFFLCKQSFHFRLTFYQVFLERIYFYGKIEHFVEVFTKDWGDSLCLLKDPFIHYIRYQGKSIFVSKDTPLLMKKWKYYLVNLCQCHFDVCFQPQKIHINPFSLYKHSFALLGYLSSSSVRLNLSVVRSQMLENAFLMDNIMNKLDTTVSIIPLIGSLAKMKFCNAVGHPISKPTWADFSDSDIIDRFVRICRNLSHYYSGSSRKKSLYRIKYILRLSCVKTLARKHKSTVRIFLKRLGSELLEEFFTEEEQIIFLIFPRASSISQKLYRGRVWYLDIICINELSNHE.

The protein belongs to the intron maturase 2 family. MatK subfamily.

The protein resides in the plastid. It localises to the chloroplast. In terms of biological role, usually encoded in the trnK tRNA gene intron. Probably assists in splicing its own and other chloroplast group II introns. The chain is Maturase K from Populus alba (White poplar).